Here is a 257-residue protein sequence, read N- to C-terminus: Neurotrophin-3 (257 aa).

The first 18 residues, 1 to 18, serve as a signal peptide directing secretion; it reads MSILFYVIFLAYLRGIQS. The propeptide occupies 19 to 138; that stretch reads TNMDQRSLPE…VLNRTSRRKR (120 aa). N-linked (GlcNAc...) asparagine glycosylation is present at Asn131. Disulfide bonds link Cys152–Cys217, Cys195–Cys246, and Cys205–Cys248.

This sequence belongs to the NGF-beta family. In the embryo, the expression peak at E4.5 and decreases at later stages of development.

Its subcellular location is the secreted. Seems to promote the survival of visceral and proprioceptive sensory neurons. This is Neurotrophin-3 (NTF3) from Gallus gallus (Chicken).